Consider the following 669-residue polypeptide: Glutamate--cysteine ligase (669 aa).

Belongs to the glutamate--cysteine ligase type 3 family. Heterodimer of a catalytic heavy chain and a regulatory light chain.

It catalyses the reaction L-cysteine + L-glutamate + ATP = gamma-L-glutamyl-L-cysteine + ADP + phosphate + H(+). It participates in sulfur metabolism; glutathione biosynthesis; glutathione from L-cysteine and L-glutamate: step 1/2. In terms of biological role, catalyzes the ATP-dependent ligation of L-glutamate and L-cysteine and participates in the first and rate-limiting step in glutathione biosynthesis. The chain is Glutamate--cysteine ligase (gcs1) from Schizosaccharomyces pombe (strain 972 / ATCC 24843) (Fission yeast).